The sequence spans 370 residues: Alanine racemase (370 aa).

The Proton acceptor; specific for D-alanine role is filled by Lys39. Lys39 carries the post-translational modification N6-(pyridoxal phosphate)lysine. Residue Arg137 participates in substrate binding. Residue Tyr258 is the Proton acceptor; specific for L-alanine of the active site. Met306 contributes to the substrate binding site.

This sequence belongs to the alanine racemase family. It depends on pyridoxal 5'-phosphate as a cofactor.

The catalysed reaction is L-alanine = D-alanine. It functions in the pathway amino-acid biosynthesis; D-alanine biosynthesis; D-alanine from L-alanine: step 1/1. Catalyzes the interconversion of L-alanine and D-alanine. May also act on other amino acids. The chain is Alanine racemase (alr) from Methylobacterium nodulans (strain LMG 21967 / CNCM I-2342 / ORS 2060).